Reading from the N-terminus, the 377-residue chain is Histone deacetylase 8 (377 aa).

A histone deacetylase region spans residues 5 to 336 (RVDVFWHEGM…LHAMLEGVLK (332 aa)). Histidine 145 functions as the Proton donor/acceptor in the catalytic mechanism. Aspartate 182, histidine 184, and aspartate 274 together coordinate Zn(2+).

It belongs to the histone deacetylase family. Zn(2+) serves as cofactor. Expressed in stems, leaves, flowers, siliques and mature seeds.

The protein resides in the nucleus. Its subcellular location is the cytoplasm. It catalyses the reaction N(6)-acetyl-L-lysyl-[histone] + H2O = L-lysyl-[histone] + acetate. In terms of biological role, responsible for the deacetylation of lysine residues on the N-terminal part of the core histones (H2A, H2B, H3 and H4). Histone deacetylation gives a tag for epigenetic repression and plays an important role in transcriptional regulation, cell cycle progression and developmental events. Histone deacetylases act via the formation of large multiprotein complexes. This is Histone deacetylase 8 from Arabidopsis thaliana (Mouse-ear cress).